The chain runs to 189 residues: Movement protein p22 (189 aa).

This sequence belongs to the tombusvirus/aureusvirus movement protein p22 family. As to quaternary structure, interacts with host protein HFI22. In terms of processing, phosphorylated.

It localises to the host membrane. Functionally, cell-to-cell movement. Displays RNA-binding activity. This chain is Movement protein p22, found in Capsicum annuum (Capsicum pepper).